The chain runs to 547 residues: MAAKQVLFADEARVRIVRGVNVLANAVKTTLGPKGRNVVLERSFGAPTVTKDGVSVAKEIELKDKFENIGAQLVKDVASKTSDNAGDGTTTATVLAQAVVQEGLKYVAAGFNPIDLKRGIDKAVAAAVEELKKLSKPVTTSKEIAQVGSISANSDASIGQIIADAMDKVGKEGVITVEDGKSLENELDVVEGMQFDRGYLSPYFINSPEKQVAALDDPYVLIYDKKVSNIRDLLPVLEQVAKSSRPLLIIAEDVEGEALATLVVNNIRGILKTTAVKAPGFGDRRKAMLEDIAILTGGTVISEETGMSLEKATLQDLGQAKRIEVAKENTTIIDGAGDGKSIEARVKQIRAQIEEATSDYDREKLQERVAKLAGGVAVIRVGAATEVEMKEKKARVEDALHATRAAVEEGVVPGGGVALLRAKQAITGLKGDTADQNAGIKLILRAVEEPLRTIVTNAGDEASVVVNTVLNGKGNYGYNAATGEYGDLVEQGVLDPTKVTRTALQNAASVASLLLTAEAAVVELMEDKPAAAPAMPGGMGGMGGMDF.

ATP contacts are provided by residues 30-33, Lys51, 87-91, Gly415, 479-481, and Asp495; these read TLGP, DGTTT, and NAA.

It belongs to the chaperonin (HSP60) family. As to quaternary structure, forms a cylinder of 14 subunits composed of two heptameric rings stacked back-to-back. Interacts with the co-chaperonin GroES.

The protein localises to the cytoplasm. The enzyme catalyses ATP + H2O + a folded polypeptide = ADP + phosphate + an unfolded polypeptide.. In terms of biological role, together with its co-chaperonin GroES, plays an essential role in assisting protein folding. The GroEL-GroES system forms a nano-cage that allows encapsulation of the non-native substrate proteins and provides a physical environment optimized to promote and accelerate protein folding. The chain is Chaperonin GroEL from Bordetella bronchiseptica (strain ATCC BAA-588 / NCTC 13252 / RB50) (Alcaligenes bronchisepticus).